A 94-amino-acid chain; its full sequence is ESAT-6-like protein EsxL (94 aa).

The protein belongs to the WXG100 family. ESAT-6 subfamily. Strongly interacts with EsxK to form a heterodimeric complex under reducing conditions.

The protein resides in the secreted. The sequence is that of ESAT-6-like protein EsxL from Mycobacterium tuberculosis (strain CDC 1551 / Oshkosh).